The sequence spans 62 residues: uncharacterized protein (62 aa).

The span at 1–13 shows a compositional bias: polar residues; sequence MGESKSPQESSSE. The tract at residues 1–62 is disordered; sequence MGESKSPQES…SRREFRRKSG (62 aa). Over residues 14 to 28 the composition is skewed to basic and acidic residues; sequence GETKRKFREALDRKM.

This is an uncharacterized protein from Mycobacterium tuberculosis (strain ATCC 25618 / H37Rv).